The chain runs to 98 residues: Co-chaperonin GroES 4 (98 aa).

Belongs to the GroES chaperonin family. As to quaternary structure, heptamer of 7 subunits arranged in a ring. Interacts with the chaperonin GroEL.

It is found in the cytoplasm. Together with the chaperonin GroEL, plays an essential role in assisting protein folding. The GroEL-GroES system forms a nano-cage that allows encapsulation of the non-native substrate proteins and provides a physical environment optimized to promote and accelerate protein folding. GroES binds to the apical surface of the GroEL ring, thereby capping the opening of the GroEL channel. The chain is Co-chaperonin GroES 4 from Mesorhizobium japonicum (strain LMG 29417 / CECT 9101 / MAFF 303099) (Mesorhizobium loti (strain MAFF 303099)).